Here is a 675-residue protein sequence, read N- to C-terminus: MGKIKKKGTSGQAKNYITRTQAVRKLQISLPDFRRLCIFKGIYPREPRNKKKASKTSTPNTTFYYTKDIQYLLHEPLLRKFREQKAVAKKIARSLGRGEVGDAARLEKNHAPKLTLDHVIKERYPTFIDALRDLDDALSLLFLFANLPSTAHVPPKTIALCQRLCHEFQHYLITTNSLRKSFLSIKGIYYQATIQGQDILWLVPYRFVQRVNGDVDYRIMATFVDFYTTLLGFVNFRLYSSIGLRYPPKFDTRSDENGAELAAFTLEGRGVGDAPKAIEAGNTQATTSTNNKEVSKEIQAKVDNVIKSAGLDEAKEEPAAETTEESSETIDKFEPAAPEADTLPQPDLSGNEAGSLFAPFTFYISREAPRAPLEFILRAFGCKRIGWDAVLGDGAFTHDETDTRITHQIVDRPQLPESSLPAIPAASKDGSDAVQKVKPGTRIPGRTYVQPQWVWDCINEGRLVRPDLYAPGATLPPHLSPWVKPSRGGYDPKASLAEQEEEGEAELDEDSDEEMEEATSDKKAEAKADVGSESEDEDESVDGGMDVAGTDDDESESEDEEEDFDGFEEEAASESEDEEEAARTQHQKELEAEAAGLPFSSNGATSDGSKKKASQAKKIAAKKRKEEEELERQKMMMSRKKRKLLEKMIYSNKKQSEEAAKLRSKRRKLEKGAAK.

The interval 309-331 (AGLDEAKEEPAAETTEESSETID) is disordered. In terms of domain architecture, BRCT spans 352 to 471 (EAGSLFAPFT…RLVRPDLYAP (120 aa)). The segment at 475–675 (LPPHLSPWVK…RRKLEKGAAK (201 aa)) is disordered. The span at 498–518 (EQEEEGEAELDEDSDEEMEEA) shows a compositional bias: acidic residues. The segment covering 519–530 (TSDKKAEAKADV) has biased composition (basic and acidic residues). Composition is skewed to acidic residues over residues 532 to 541 (SESEDEDESV) and 549 to 580 (GTDD…DEEE). A coiled-coil region spans residues 551–675 (DDDESESEDE…RRKLEKGAAK (125 aa)). Residues 581 to 591 (AARTQHQKELE) show a composition bias toward basic and acidic residues. The segment covering 611 to 623 (KKASQAKKIAAKK) has biased composition (basic residues). Residues 624-634 (RKEEEELERQK) show a composition bias toward basic and acidic residues.

This sequence belongs to the pescadillo family. As to quaternary structure, component of the NOP7 complex, composed of erb1, nop7 and ytm1. The complex is held together by erb1, which interacts with nop7 via its N-terminal domain and with ytm1 via a high-affinity interaction between the seven-bladed beta-propeller domains of the 2 proteins. The NOP7 complex associates with the 66S pre-ribosome.

The protein resides in the nucleus. Its subcellular location is the nucleolus. The protein localises to the nucleoplasm. Its function is as follows. Component of the NOP7 complex, which is required for maturation of the 25S and 5.8S ribosomal RNAs and formation of the 60S ribosome. The protein is Pescadillo homolog (nop7) of Aspergillus fumigatus (strain CBS 144.89 / FGSC A1163 / CEA10) (Neosartorya fumigata).